The following is a 77-amino-acid chain: U8-lycotoxin-Ls1f (77 aa).

Residues 1 to 20 (MKLIIFTGLVLFAIVSLIEV) form the signal peptide. Positions 21 to 26 (QADNER) are excised as a propeptide.

This sequence belongs to the neurotoxin 19 (CSTX) family. 08 (U8-Lctx) subfamily. Contains 4 disulfide bonds. As to expression, expressed by the venom gland.

The protein resides in the secreted. The polypeptide is U8-lycotoxin-Ls1f (Lycosa singoriensis (Wolf spider)).